Consider the following 166-residue polypeptide: Cyanate hydratase (166 aa).

Residues Arg92, Glu95, and Ser118 contribute to the active site.

It belongs to the cyanase family.

The enzyme catalyses cyanate + hydrogencarbonate + 3 H(+) = NH4(+) + 2 CO2. Its function is as follows. Catalyzes the reaction of cyanate with bicarbonate to produce ammonia and carbon dioxide. The polypeptide is Cyanate hydratase (Zea mays (Maize)).